The following is a 451-amino-acid chain: Probable phosphoglucosamine mutase (451 aa).

The active-site Phosphoserine intermediate is the Ser-96. Positions 96, 233, 235, and 237 each coordinate Mg(2+). At Ser-96 the chain carries Phosphoserine.

This sequence belongs to the phosphohexose mutase family. Requires Mg(2+) as cofactor. In terms of processing, activated by phosphorylation.

It carries out the reaction alpha-D-glucosamine 1-phosphate = D-glucosamine 6-phosphate. Its function is as follows. Catalyzes the conversion of glucosamine-6-phosphate to glucosamine-1-phosphate. This Pyrococcus horikoshii (strain ATCC 700860 / DSM 12428 / JCM 9974 / NBRC 100139 / OT-3) protein is Probable phosphoglucosamine mutase.